A 75-amino-acid polypeptide reads, in one-letter code: Protease B inhibitor 2 (75 aa).

Thr74 is subject to Phosphothreonine.

It belongs to the protease inhibitor I9 family. Part of the heterodimeric LMA1 complex together with the thioredoxin II/TRX2. LMA1 binds to the ATPase SEC18.

Its subcellular location is the cytoplasm. Functionally, cytosolic inhibitor of vacuolar proteinase B (yscB), probably regulating protease B activity during limited proteolysis. PBI2 is a component of the LMA1 complex, which is involved in the facilitation of vesicle fusion such as homotypic vacuole and ER-derived COPII vesicle fusion with the Golgi. The polypeptide is Protease B inhibitor 2 (PBI2) (Saccharomyces cerevisiae (strain ATCC 204508 / S288c) (Baker's yeast)).